We begin with the raw amino-acid sequence, 107 residues long: Putative double-stranded DNA mimic protein PC1_1990 (107 aa).

The protein belongs to the putative dsDNA mimic protein family.

In terms of biological role, may act as a double-stranded DNA (dsDNA) mimic. Probably regulates the activity of a dsDNA-binding protein. The chain is Putative double-stranded DNA mimic protein PC1_1990 from Pectobacterium carotovorum subsp. carotovorum (strain PC1).